A 290-amino-acid polypeptide reads, in one-letter code: uncharacterized protein (290 aa).

Disordered stretches follow at residues 17–91 (QTIS…EKNS) and 220–259 (DKASEPINGEEKEEGEKDGNAEQGKQKEVQDEQEEVQMPN). Residues 40 to 50 (NITTHLSTGNL) are compositionally biased toward polar residues. Over residues 66–83 (STKKGKRVSKPGTKKKEK) the composition is skewed to basic residues. Basic and acidic residues predominate over residues 233-249 (EGEKDGNAEQGKQKEVQ).

This is an uncharacterized protein from Saccharomyces cerevisiae (strain ATCC 204508 / S288c) (Baker's yeast).